We begin with the raw amino-acid sequence, 541 residues long: Solute carrier family 22 member 10 (541 aa).

At Met-1–Arg-15 the chain is on the cytoplasmic side. Residues Phe-16–Leu-36 form a helical membrane-spanning segment. The Extracellular portion of the chain corresponds to Leu-37–Lys-145. N-linked (GlcNAc...) asparagine glycans are attached at residues Asn-56 and Asn-102. A helical membrane pass occupies residues Ser-146–Val-166. Residues Ser-167–Ala-193 lie on the Cytoplasmic side of the membrane. A helical membrane pass occupies residues Pro-194 to Ile-214. Residues Ser-215–Lys-230 lie on the Extracellular side of the membrane. Residues Ala-231–Leu-251 form a helical membrane-spanning segment. Over Ala-252 to Gln-259 the chain is Cytoplasmic. The helical transmembrane segment at Thr-260–Val-280 threads the bilayer. Topologically, residues Glu-281–Arg-349 are extracellular. The helical transmembrane segment at Ile-350–Asn-370 threads the bilayer. Residues Leu-371–Asn-377 are Cytoplasmic-facing. Residues Ile-378–Leu-398 traverse the membrane as a helical segment. At Thr-399 to Arg-406 the chain is on the extracellular side. The chain crosses the membrane as a helical span at residues Ile-407 to Pro-427. At Lys-428 to Ala-436 the chain is on the cytoplasmic side. Residues Leu-437–Ile-457 traverse the membrane as a helical segment. Residues Glu-458–Asp-472 lie on the Extracellular side of the membrane. The chain crosses the membrane as a helical span at residues Leu-473–Phe-493. Residues Thr-494 to Thr-495 lie on the Cytoplasmic side of the membrane. A helical membrane pass occupies residues Leu-496 to Pro-516. At Glu-517–Ala-541 the chain is on the extracellular side.

Belongs to the major facilitator (TC 2.A.1) superfamily. Organic cation transporter (TC 2.A.1.19) family. As to expression, detected in fetal and adult liver, and in adult kidney.

Its subcellular location is the membrane. The polypeptide is Solute carrier family 22 member 10 (SLC22A10) (Homo sapiens (Human)).